Reading from the N-terminus, the 334-residue chain is Holliday junction branch migration complex subunit RuvB (334 aa).

The large ATPase domain (RuvB-L) stretch occupies residues 4–184 (ADRLIQPQDL…FGIPLRLEFY (181 aa)). ATP-binding positions include arginine 24, glycine 65, lysine 68, threonine 69, threonine 70, 131-133 (EDY), arginine 174, tyrosine 184, and arginine 221. Residue threonine 69 coordinates Mg(2+). A small ATPAse domain (RuvB-S) region spans residues 185 to 255 (NVRDLSSIVA…VAQSALDLLD (71 aa)). Residues 258 to 334 (SEGFDYMDRK…YSHFDLIKPD (77 aa)) are head domain (RuvB-H). Positions 294, 313, and 318 each coordinate DNA.

This sequence belongs to the RuvB family. In terms of assembly, homohexamer. Forms an RuvA(8)-RuvB(12)-Holliday junction (HJ) complex. HJ DNA is sandwiched between 2 RuvA tetramers; dsDNA enters through RuvA and exits via RuvB. An RuvB hexamer assembles on each DNA strand where it exits the tetramer. Each RuvB hexamer is contacted by two RuvA subunits (via domain III) on 2 adjacent RuvB subunits; this complex drives branch migration. In the full resolvosome a probable DNA-RuvA(4)-RuvB(12)-RuvC(2) complex forms which resolves the HJ.

It is found in the cytoplasm. The enzyme catalyses ATP + H2O = ADP + phosphate + H(+). Its function is as follows. The RuvA-RuvB-RuvC complex processes Holliday junction (HJ) DNA during genetic recombination and DNA repair, while the RuvA-RuvB complex plays an important role in the rescue of blocked DNA replication forks via replication fork reversal (RFR). RuvA specifically binds to HJ cruciform DNA, conferring on it an open structure. The RuvB hexamer acts as an ATP-dependent pump, pulling dsDNA into and through the RuvAB complex. RuvB forms 2 homohexamers on either side of HJ DNA bound by 1 or 2 RuvA tetramers; 4 subunits per hexamer contact DNA at a time. Coordinated motions by a converter formed by DNA-disengaged RuvB subunits stimulates ATP hydrolysis and nucleotide exchange. Immobilization of the converter enables RuvB to convert the ATP-contained energy into a lever motion, pulling 2 nucleotides of DNA out of the RuvA tetramer per ATP hydrolyzed, thus driving DNA branch migration. The RuvB motors rotate together with the DNA substrate, which together with the progressing nucleotide cycle form the mechanistic basis for DNA recombination by continuous HJ branch migration. Branch migration allows RuvC to scan DNA until it finds its consensus sequence, where it cleaves and resolves cruciform DNA. The sequence is that of Holliday junction branch migration complex subunit RuvB from Shewanella amazonensis (strain ATCC BAA-1098 / SB2B).